We begin with the raw amino-acid sequence, 318 residues long: uncharacterized protein (318 aa).

Belongs to the glycosyltransferase 2 family.

This is an uncharacterized protein from Rickettsia prowazekii (strain Madrid E).